We begin with the raw amino-acid sequence, 520 residues long: GMP synthase [glutamine-hydrolyzing] (520 aa).

Residues Lys4–Asp202 form the Glutamine amidotransferase type-1 domain. Catalysis depends on Cys81, which acts as the Nucleophile. Active-site residues include His176 and Glu178. One can recognise a GMPS ATP-PPase domain in the interval Trp203–Arg395. Ser230–Ser236 lines the ATP pocket.

In terms of assembly, homodimer.

It carries out the reaction XMP + L-glutamine + ATP + H2O = GMP + L-glutamate + AMP + diphosphate + 2 H(+). It functions in the pathway purine metabolism; GMP biosynthesis; GMP from XMP (L-Gln route): step 1/1. In terms of biological role, catalyzes the synthesis of GMP from XMP. This is GMP synthase [glutamine-hydrolyzing] from Thiobacillus denitrificans (strain ATCC 25259 / T1).